The primary structure comprises 199 residues: Thymidylate kinase (199 aa).

ATP is bound at residue Gly-7 to Thr-14.

The protein belongs to the thymidylate kinase family.

It catalyses the reaction dTMP + ATP = dTDP + ADP. In terms of biological role, phosphorylation of dTMP to form dTDP in both de novo and salvage pathways of dTTP synthesis. The chain is Thymidylate kinase from Acinetobacter baumannii (strain ATCC 17978 / DSM 105126 / CIP 53.77 / LMG 1025 / NCDC KC755 / 5377).